A 501-amino-acid chain; its full sequence is ATP synthase subunit alpha (501 aa).

Position 169–176 (169–176 (GDRQTGKT)) interacts with ATP.

The protein belongs to the ATPase alpha/beta chains family. F-type ATPases have 2 components, CF(1) - the catalytic core - and CF(0) - the membrane proton channel. CF(1) has five subunits: alpha(3), beta(3), gamma(1), delta(1), epsilon(1). CF(0) has three main subunits: a(1), b(2) and c(9-12). The alpha and beta chains form an alternating ring which encloses part of the gamma chain. CF(1) is attached to CF(0) by a central stalk formed by the gamma and epsilon chains, while a peripheral stalk is formed by the delta and b chains.

It is found in the cell membrane. The enzyme catalyses ATP + H2O + 4 H(+)(in) = ADP + phosphate + 5 H(+)(out). Its function is as follows. Produces ATP from ADP in the presence of a proton gradient across the membrane. The alpha chain is a regulatory subunit. The sequence is that of ATP synthase subunit alpha from Streptococcus equi subsp. equi (strain 4047).